A 132-amino-acid chain; its full sequence is Large-conductance mechanosensitive channel (132 aa).

Transmembrane regions (helical) follow at residues 14–34 (VVDLAVGVVIGAAFGKIVSSL), 38–58 (IITPLLGMVLGGVNFTDLHFG), and 67–87 (GNFIQTIFDFLIIAASIFMFI).

It belongs to the MscL family. Homopentamer.

It localises to the cell membrane. Functionally, channel that opens in response to stretch forces in the membrane lipid bilayer. May participate in the regulation of osmotic pressure changes within the cell. The protein is Large-conductance mechanosensitive channel of Bacillus cereus (strain G9842).